A 39-amino-acid polypeptide reads, in one-letter code: Photosystem II reaction center protein J (39 aa).

The chain crosses the membrane as a helical span at residues 9–29 (LWMVATVGGLAAGGLLILFVF).

Belongs to the PsbJ family. PSII is composed of 1 copy each of membrane proteins PsbA, PsbB, PsbC, PsbD, PsbE, PsbF, PsbH, PsbI, PsbJ, PsbK, PsbL, PsbM, PsbT, PsbX, PsbY, PsbZ, Psb30/Ycf12, at least 3 peripheral proteins of the oxygen-evolving complex and a large number of cofactors. It forms dimeric complexes.

The protein localises to the plastid. Its subcellular location is the chloroplast thylakoid membrane. One of the components of the core complex of photosystem II (PSII). PSII is a light-driven water:plastoquinone oxidoreductase that uses light energy to abstract electrons from H(2)O, generating O(2) and a proton gradient subsequently used for ATP formation. It consists of a core antenna complex that captures photons, and an electron transfer chain that converts photonic excitation into a charge separation. This chain is Photosystem II reaction center protein J, found in Emiliania huxleyi (Coccolithophore).